A 363-amino-acid chain; its full sequence is Aminomethyltransferase (363 aa).

The protein belongs to the GcvT family. As to quaternary structure, the glycine cleavage system is composed of four proteins: P, T, L and H.

It catalyses the reaction N(6)-[(R)-S(8)-aminomethyldihydrolipoyl]-L-lysyl-[protein] + (6S)-5,6,7,8-tetrahydrofolate = N(6)-[(R)-dihydrolipoyl]-L-lysyl-[protein] + (6R)-5,10-methylene-5,6,7,8-tetrahydrofolate + NH4(+). The glycine cleavage system catalyzes the degradation of glycine. This is Aminomethyltransferase from Teredinibacter turnerae (strain ATCC 39867 / T7901).